The primary structure comprises 179 residues: UPF0302 protein YpiB (179 aa).

It belongs to the UPF0302 family.

The protein is UPF0302 protein YpiB (ypiB) of Bacillus subtilis (strain 168).